The chain runs to 459 residues: Polycomb protein mes-6 (459 aa).

WD repeat units follow at residues 146 to 186 (SVGW…CLIV), 192 to 231 (CHAGTILSVDWSTDGDFILSCGFDHQLMEWDLSVKQVKEH), 305 to 346 (MHSD…GEVE), 370 to 409 (SGSAWFIKFAVDPRRRWLVCGGAGGSVMFFDLRNNEETNP), and 415 to 454 (VGSRTVRQASFSTCGRFLVLVTDEGFVCRFDRVSASVDAK).

It belongs to the WD repeat ESC family. In terms of assembly, interacts directly with the N-terminal domain of mes-2. Forms a heterotrimeric complex with mes-2 and mes-3. Does not interact with mes-4. In adults, it is predominantly expressed in the germline, and weakly expressed in intestinal cells.

The protein resides in the nucleus. Functionally, polycomb group (PcG) protein. PcG proteins act by forming multiprotein complexes, which are required to maintain the transcriptionally repressive state of homeotic genes throughout development. In association with the nfya-1-NF-Y complex, may play a role in repressing the expression of the homeobox protein egl-5 in tissues such as the head. PcG proteins are not required to initiate repression, but to maintain it during later stages of development. The mes-2/mes-3/mes-6 complex may participate in the global inactivation of the X chromosomes in germline cells. The complex may act via methylation of histone H3 'Lys-27', rendering chromatin heritably changed in its expressibility. This complex is required to exclude mes-4 from the inactivated X-chromosomes in germline cells. Required for small-RNA-induced H3K27 trimethylation. The chain is Polycomb protein mes-6 from Caenorhabditis elegans.